Reading from the N-terminus, the 216-residue chain is Uracil phosphoribosyltransferase (216 aa).

5-phospho-alpha-D-ribose 1-diphosphate is bound by residues arginine 85, arginine 110, and 135–143 (DPMVATGYS). Uracil-binding positions include isoleucine 200 and 205–207 (GDA). A 5-phospho-alpha-D-ribose 1-diphosphate-binding site is contributed by aspartate 206.

It belongs to the UPRTase family. Mg(2+) is required as a cofactor.

The catalysed reaction is UMP + diphosphate = 5-phospho-alpha-D-ribose 1-diphosphate + uracil. The protein operates within pyrimidine metabolism; UMP biosynthesis via salvage pathway; UMP from uracil: step 1/1. With respect to regulation, allosterically activated by GTP. Catalyzes the conversion of uracil and 5-phospho-alpha-D-ribose 1-diphosphate (PRPP) to UMP and diphosphate. The chain is Uracil phosphoribosyltransferase from Burkholderia vietnamiensis (strain G4 / LMG 22486) (Burkholderia cepacia (strain R1808)).